The chain runs to 201 residues: uncharacterized protein (201 aa).

A disordered region spans residues 53–74 (PKKNTAHKNSTTSTVASSGNTT). A compositionally biased stretch (polar residues) spans 59–74 (HKNSTTSTVASSGNTT). In terms of domain architecture, bHLH spans 88–136 (AKRLSHKEVERRRREAISEGIKELANIVPGCEKNKGSILQRTAQYIRSL).

Its subcellular location is the nucleus. This is an uncharacterized protein from Schizosaccharomyces pombe (strain 972 / ATCC 24843) (Fission yeast).